The following is a 387-amino-acid chain: Succinate--CoA ligase [ADP-forming] subunit beta (387 aa).

The ATP-grasp domain maps to 9–244; it reads KQLFAEYGIP…KTQEDETEVL (236 aa). Residues K46, 53 to 55, G102, and E107 each bind ATP; that span reads GRG. 2 residues coordinate Mg(2+): N199 and D213. Residues N264 and 321–323 each bind substrate; that span reads GIV.

Belongs to the succinate/malate CoA ligase beta subunit family. Heterotetramer of two alpha and two beta subunits. It depends on Mg(2+) as a cofactor.

The enzyme catalyses succinate + ATP + CoA = succinyl-CoA + ADP + phosphate. It carries out the reaction GTP + succinate + CoA = succinyl-CoA + GDP + phosphate. The protein operates within carbohydrate metabolism; tricarboxylic acid cycle; succinate from succinyl-CoA (ligase route): step 1/1. Succinyl-CoA synthetase functions in the citric acid cycle (TCA), coupling the hydrolysis of succinyl-CoA to the synthesis of either ATP or GTP and thus represents the only step of substrate-level phosphorylation in the TCA. The beta subunit provides nucleotide specificity of the enzyme and binds the substrate succinate, while the binding sites for coenzyme A and phosphate are found in the alpha subunit. This is Succinate--CoA ligase [ADP-forming] subunit beta from Xylella fastidiosa (strain 9a5c).